We begin with the raw amino-acid sequence, 754 residues long: ToMV resistance protein Tm-1(GCR237) (754 aa).

An N-terminal inhibitory domain NN region spans residues 1 to 201 (MATAQSNSPR…AGMVIGRLES (201 aa)). ATP-binding positions include 18–20 (DTK), Thr55, Arg92, and 124–127 (GSGG). The tract at residues 211–431 (KFTVGVTMFG…VDSFLEISPK (221 aa)) is N-terminal inhibitory domain NC.

Belongs to the UPF0261 family. Homodimer. As to quaternary structure, (Microbial infection) Binds, via an ATP bridge, to the tobamoviruses avirulent (Avr) replication proteins (large and small subunits, e.g. tomato mosaic virus (ToMV/TMV) AC P03587, tobacco mild green mosaic virus (TMGMV) AC P18339 and pepper mild mottle virus (PMMoV) AC P89657) to inhibit their function after the translation of tobamoviruses RNA, but before the viral replication complex formation on the membrane surfaces; this interaction is not possible with resistance-breaking strains replication proteins.

Functionally, inhibitor of viral RNA replication which confers resistance to some tobamoviruses including tomato mosaic virus (ToMV) (e.g. isolate L), tobacco mosaic virus (TMV), tobacco mild green mosaic virus (TMGMV) and pepper mild mottle virus (PMMoV), but not to resistance-breaking isolates of ToMV (e.g. LT1, SL-1 and ToMV1-2) and tomato brown rugose fruit virus (ToBRFV). Prevents tobamoviruses RNA replication by affecting the association of tobamoviruses replication proteins (large and small subunits) with host membrane-associated proteins (e.g. TOM1, TOM2A and ARL8), thus inhibiting the replication complex formation on the membranes and avoiding viral negative-strand RNA synthesis. Inhibits triphosphatase activity of ToMV replication proteins. The polypeptide is ToMV resistance protein Tm-1(GCR237) (Solanum lycopersicum (Tomato)).